A 65-amino-acid chain; its full sequence is MVSVQINDNESIDKMLKRFKKKYERAGVLKEFRKKAYFVKPSVDGRLKRSRSRRRAQRANEERNS.

Residues 45 to 65 form a disordered region; it reads GRLKRSRSRRRAQRANEERNS. Over residues 48–57 the composition is skewed to basic residues; the sequence is KRSRSRRRAQ.

Belongs to the bacterial ribosomal protein bS21 family.

The polypeptide is Small ribosomal subunit protein bS21 (Chlorobium phaeobacteroides (strain DSM 266 / SMG 266 / 2430)).